A 96-amino-acid polypeptide reads, in one-letter code: Small ribosomal subunit protein bS6 (96 aa).

It belongs to the bacterial ribosomal protein bS6 family.

Binds together with bS18 to 16S ribosomal RNA. This is Small ribosomal subunit protein bS6 from Streptococcus suis (strain 98HAH33).